A 1143-amino-acid chain; its full sequence is Disease resistance protein Piks-1 (1143 aa).

Positions 1-190 are structured coiled coil (CC) domain; sequence MEAAAMAVTA…PLRIMGGEMQ (190 aa). Residues 189 to 258 form the HMA domain; sequence MQKIVFKIPM…KVGPAMFLEV (70 aa). Residues 191–264 are HMA-like domain; sequence KIVFKIPMVD…FLEVSQAKED (74 aa). Residues 282–570 enclose the NB-ARC domain; sequence HEVKTICILG…WIAEGFVSEE (289 aa). LRR repeat units follow at residues 681-706, 708-731, 732-754, 756-777, 778-800, 802-823, 824-848, 945-968, 979-1002, and 1004-1027; these read FKRL…ICEQ, SLRV…MRKL, KHLE…IGEL, HLRI…IREL, QHLH…VGKL, NLKI…IGEL, NHLQ…QISQ, MPNL…INGT, DSRV…EFKF, and AGPA…VFRC.

Belongs to the disease resistance NB-LRR family. As to quaternary structure, interacts with AVR-Pik through its N-terminal part containing the HMA-like domain.

In terms of biological role, disease resistance (R) protein that specifically recognizes the AVR-Pik effector avirulence protein from M.oryzae. Resistance proteins guard the plant against pathogens that contain an appropriate avirulence protein via an indirect interaction with this avirulence protein. That triggers a defense system including the hypersensitive response, which restricts the pathogen growth. The sequence is that of Disease resistance protein Piks-1 from Oryza sativa subsp. japonica (Rice).